The primary structure comprises 346 residues: uncharacterized protein (346 aa).

Belongs to the MG067/MG068/MG395 family.

This is an uncharacterized protein from Mycoplasma pneumoniae (strain ATCC 29342 / M129 / Subtype 1) (Mycoplasmoides pneumoniae).